Reading from the N-terminus, the 240-residue chain is Protein Thf1 (240 aa).

Residues 186 to 222 (KDLDLYRSNLEKVDQLLKVLEDAAEAERKKKEKQAAS) adopt a coiled-coil conformation. The disordered stretch occupies residues 212–240 (ERKKKEKQAASTTPAIEEAPVTTAESSES).

It belongs to the THF1 family.

In terms of biological role, may be involved in photosynthetic membrane biogenesis. This chain is Protein Thf1, found in Synechocystis sp. (strain ATCC 27184 / PCC 6803 / Kazusa).